A 135-amino-acid polypeptide reads, in one-letter code: Endoribonuclease YbeY (135 aa).

Residues His-102, His-106, and His-112 each coordinate Zn(2+).

It belongs to the endoribonuclease YbeY family. Zn(2+) serves as cofactor.

It is found in the cytoplasm. In terms of biological role, single strand-specific metallo-endoribonuclease involved in late-stage 70S ribosome quality control and in maturation of the 3' terminus of the 16S rRNA. The polypeptide is Endoribonuclease YbeY (Rubrobacter xylanophilus (strain DSM 9941 / JCM 11954 / NBRC 16129 / PRD-1)).